Consider the following 348-residue polypeptide: Dihydroorotase (348 aa).

2 residues coordinate Zn(2+): H17 and H19. Substrate-binding positions include 19–21 (HLR) and N45. Residues K103, H140, and H178 each contribute to the Zn(2+) site. K103 carries the post-translational modification N6-carboxylysine. Substrate is bound at residue H140. L223 serves as a coordination point for substrate. D251 contacts Zn(2+). D251 is a catalytic residue. 2 residues coordinate substrate: H255 and A267.

Belongs to the metallo-dependent hydrolases superfamily. DHOase family. Class II DHOase subfamily. In terms of assembly, homodimer. Zn(2+) is required as a cofactor.

The enzyme catalyses (S)-dihydroorotate + H2O = N-carbamoyl-L-aspartate + H(+). It participates in pyrimidine metabolism; UMP biosynthesis via de novo pathway; (S)-dihydroorotate from bicarbonate: step 3/3. In terms of biological role, catalyzes the reversible cyclization of carbamoyl aspartate to dihydroorotate. The chain is Dihydroorotase from Shigella sonnei (strain Ss046).